Here is a 214-residue protein sequence, read N- to C-terminus: ATP phosphoribosyltransferase (214 aa).

It belongs to the ATP phosphoribosyltransferase family. Short subfamily. Heteromultimer composed of HisG and HisZ subunits.

It localises to the cytoplasm. It catalyses the reaction 1-(5-phospho-beta-D-ribosyl)-ATP + diphosphate = 5-phospho-alpha-D-ribose 1-diphosphate + ATP. It participates in amino-acid biosynthesis; L-histidine biosynthesis; L-histidine from 5-phospho-alpha-D-ribose 1-diphosphate: step 1/9. Its function is as follows. Catalyzes the condensation of ATP and 5-phosphoribose 1-diphosphate to form N'-(5'-phosphoribosyl)-ATP (PR-ATP). Has a crucial role in the pathway because the rate of histidine biosynthesis seems to be controlled primarily by regulation of HisG enzymatic activity. In Marinobacter nauticus (strain ATCC 700491 / DSM 11845 / VT8) (Marinobacter aquaeolei), this protein is ATP phosphoribosyltransferase.